Consider the following 412-residue polypeptide: Homoserine dehydrogenase (412 aa).

NADP(+) contacts are provided by residues 9–16 (LGIGTVGG) and Lys-105. Glu-190 serves as a coordination point for substrate. Residue Lys-205 is the Proton donor of the active site. One can recognise an ACT domain in the interval 330-407 (YLRLRAVDKP…ISGKVTRLRM (78 aa)).

The protein belongs to the homoserine dehydrogenase family.

It catalyses the reaction L-homoserine + NADP(+) = L-aspartate 4-semialdehyde + NADPH + H(+). The enzyme catalyses L-homoserine + NAD(+) = L-aspartate 4-semialdehyde + NADH + H(+). It functions in the pathway amino-acid biosynthesis; L-methionine biosynthesis via de novo pathway; L-homoserine from L-aspartate: step 3/3. Its pathway is amino-acid biosynthesis; L-threonine biosynthesis; L-threonine from L-aspartate: step 3/5. This Methylobacillus glycogenes protein is Homoserine dehydrogenase (hom).